Consider the following 79-residue polypeptide: Small ribosomal subunit protein uS17 (79 aa).

Belongs to the universal ribosomal protein uS17 family. As to quaternary structure, part of the 30S ribosomal subunit.

One of the primary rRNA binding proteins, it binds specifically to the 5'-end of 16S ribosomal RNA. This Mesorhizobium japonicum (strain LMG 29417 / CECT 9101 / MAFF 303099) (Mesorhizobium loti (strain MAFF 303099)) protein is Small ribosomal subunit protein uS17.